Here is a 316-residue protein sequence, read N- to C-terminus: Pantothenate kinase (316 aa).

95 to 102 (GSVAVGKS) is an ATP binding site.

Belongs to the prokaryotic pantothenate kinase family.

The protein localises to the cytoplasm. The enzyme catalyses (R)-pantothenate + ATP = (R)-4'-phosphopantothenate + ADP + H(+). Its pathway is cofactor biosynthesis; coenzyme A biosynthesis; CoA from (R)-pantothenate: step 1/5. The chain is Pantothenate kinase from Yersinia enterocolitica serotype O:8 / biotype 1B (strain NCTC 13174 / 8081).